A 212-amino-acid polypeptide reads, in one-letter code: Probable 2-dehydro-3-deoxy-6-phosphogalactonate aldolase (212 aa).

Arg18 provides a ligand contact to 2-dehydro-3-deoxy-6-phospho-D-galactonate. The active-site Proton donor/acceptor is the Glu41. Positions 70, 130, 160, 180, and 181 each coordinate 2-dehydro-3-deoxy-6-phospho-D-galactonate. Lys130 functions as the Schiff-base intermediate with substrate in the catalytic mechanism.

This sequence belongs to the KHG/KDPG aldolase family. As to quaternary structure, homotrimer.

It carries out the reaction 2-dehydro-3-deoxy-6-phospho-D-galactonate = D-glyceraldehyde 3-phosphate + pyruvate. It functions in the pathway carbohydrate acid metabolism; D-galactonate degradation; D-glyceraldehyde 3-phosphate and pyruvate from D-galactonate: step 3/3. Functionally, involved in the degradation of galactose via the DeLey-Doudoroff pathway. Catalyzes the reversible, stereospecific retro-aldol cleavage of 2-keto-3-deoxy-6-phosphogalactonate (KDPGal) to pyruvate and D-glyceraldehyde-3-phosphate. The protein is Probable 2-dehydro-3-deoxy-6-phosphogalactonate aldolase (dgoA) of Rhizobium meliloti (strain 1021) (Ensifer meliloti).